We begin with the raw amino-acid sequence, 423 residues long: Probable sucrose-phosphate synthase (423 aa).

This sequence belongs to the glycosyltransferase 1 family.

The catalysed reaction is beta-D-fructose 6-phosphate + UDP-alpha-D-glucose = sucrose 6(F)-phosphate + UDP + H(+). In terms of biological role, plays a role in sucrose synthesis by catalyzing the first step of sucrose biosynthesis from UDP-glucose and fructose-6-phosphate. This is Probable sucrose-phosphate synthase from Thermosipho melanesiensis (strain DSM 12029 / CIP 104789 / BI429).